The chain runs to 48 residues: Large ribosomal subunit protein bL33A (48 aa).

Belongs to the bacterial ribosomal protein bL33 family.

This chain is Large ribosomal subunit protein bL33A, found in Streptococcus agalactiae serotype V (strain ATCC BAA-611 / 2603 V/R).